A 275-amino-acid polypeptide reads, in one-letter code: Putative Ig-like V-type domain-containing protein FPV055 (275 aa).

Ig-like V-type domains follow at residues 25 to 122 and 140 to 239; these read KTFV…MNLG and PRRS…KSLS.

In Fowlpox virus (strain NVSL) (FPV), this protein is Putative Ig-like V-type domain-containing protein FPV055.